We begin with the raw amino-acid sequence, 1620 residues long: Myb-like protein X (1620 aa).

The span at 1 to 13 shows a compositional bias: polar residues; that stretch reads MSTIGNNASSIGN. 4 disordered regions span residues 1-57, 176-204, 294-318, and 450-849; these read MSTI…TTTT, TGSGGIGGGGSGSSTPNRGRFSGKTSNIG, FFQDDNENGNGNGNGSGSGSNNMTE, and KEEK…TKSA. Positions 28–57 are enriched in low complexity; it reads PPTTTTTTTTTTTTTTTTPTTTTPTTTTTT. Positions 177–187 are enriched in gly residues; that stretch reads GSGGIGGGGSG. Residues 310-421 form the SWIRM domain; sequence GSGSNNMTEI…CFVNSGDYMN (112 aa). Residues 450-497 show a composition bias toward basic and acidic residues; the sequence is KEEKERLEREEKERLEREEKQEKEEKERLEKEEKERLEREEKQEKEEK. Residues 498-511 show a composition bias toward acidic residues; sequence EEKEEKEENEEKEE. A compositionally biased stretch (basic and acidic residues) spans 512-568; sequence KEEKEKEEKEEKEKQEKEDDKEKQENENEQEKIEKKENKNDSQNKEIKENHDKKDET. Low complexity predominate over residues 570–598; sequence DSNNTTTTTTTTTTTSTNTLVAESSSSSS. A compositionally biased stretch (basic and acidic residues) spans 606-628; it reads KEMKEQPVQENKDKEMMETDTTK. The span at 629–645 shows a compositional bias: low complexity; that stretch reads ENNGVETTETTNQTTDS. The span at 647–798 shows a compositional bias: basic and acidic residues; that stretch reads ETDKEMKDQP…EIKKDKLKEN (152 aa). The span at 799–834 shows a compositional bias: acidic residues; sequence EEVEGEIEGENDEGEVVEEDEDEEMEIEEDEEDEED. An SANT domain is found at 925–977; sequence PEEFGWTDIETLLLLEGIEIFRDNWQEISDYIGGSKTPEQCLTHFIRLPIEDE. Residues 1049-1506 are disordered; the sequence is QPSKEELERI…DDDEDVEMET (458 aa). Composition is skewed to basic and acidic residues over residues 1051 to 1195, 1219 to 1255, and 1264 to 1302; these read SKEE…DKSD, ETVEMNQDDHVKIDEKETKENDKKSITEEENQQKDDN, and HNKEIEKDDNKENENEKEKENENKNEKQIENENEKEKDL. The span at 1303-1325 shows a compositional bias: low complexity; the sequence is NNLSESQSSNDQSKSNEQMSSDN. Residues 1338 to 1350 show a composition bias toward polar residues; the sequence is TQITSKEQNITTD. Low complexity-rich tracts occupy residues 1358–1382 and 1390–1416; these read TPTTTTPATLPATPISESNTTTTNT and NETNKTNENNSNNNNTNEENKTAESNN. Composition is skewed to acidic residues over residues 1467 to 1481 and 1493 to 1504; these read EENEMEEVEEEENDL and VGEEDDDEDVEM.

It is found in the nucleus. This chain is Myb-like protein X (mybX), found in Dictyostelium discoideum (Social amoeba).